We begin with the raw amino-acid sequence, 234 residues long: ATP synthase subunit a 2 (234 aa).

Transmembrane regions (helical) follow at residues 29–49, 90–110, 116–136, 147–167, 186–206, and 207–227; these read FFQHVTHTWLVMAILIGVGLL, LIATLALFLLVSNLIGLIPGF, SLNTNAALAVGVFLVTHIVGV, FMGPVWWLTPLILPIELIGHL, IVLMIFFSLVPLLLPIPMMLM, and GILVAFIQTFVFMLLSMIYIA.

The protein belongs to the ATPase A chain family. As to quaternary structure, F-type ATPases have 2 components, CF(1) - the catalytic core - and CF(0) - the membrane proton channel. CF(1) has five subunits: alpha(3), beta(3), gamma(1), delta(1), epsilon(1). CF(0) has three main subunits: a(1), b(2) and c(9-12). The alpha and beta chains form an alternating ring which encloses part of the gamma chain. CF(1) is attached to CF(0) by a central stalk formed by the gamma and epsilon chains, while a peripheral stalk is formed by the delta and b chains.

It localises to the cell inner membrane. In terms of biological role, key component of the proton channel; it plays a direct role in the translocation of protons across the membrane. The sequence is that of ATP synthase subunit a 2 from Syntrophotalea carbinolica (strain DSM 2380 / NBRC 103641 / GraBd1) (Pelobacter carbinolicus).